The primary structure comprises 104 residues: UPF0212 protein PH1312 (104 aa).

It belongs to the UPF0212 family.

This is UPF0212 protein PH1312 from Pyrococcus horikoshii (strain ATCC 700860 / DSM 12428 / JCM 9974 / NBRC 100139 / OT-3).